A 103-amino-acid chain; its full sequence is Histone H4 (103 aa).

Gly residues predominate over residues 1–14; it reads MSGRGKGGKGLGKG. The segment at 1 to 20 is disordered; it reads MSGRGKGGKGLGKGGAKRHR. Residue S2 is modified to N-acetylserine. Position 17 is an N6-acetyllysine (K17). A DNA-binding region spans residues 17–21; the sequence is KRHRK. Residue K21 is modified to N6-methyllysine.

Belongs to the histone H4 family. The nucleosome is a histone octamer containing two molecules each of H2A, H2B, H3 and H4 assembled in one H3-H4 heterotetramer and two H2A-H2B heterodimers. The octamer wraps approximately 147 bp of DNA.

It localises to the nucleus. It is found in the chromosome. In terms of biological role, core component of nucleosome. Nucleosomes wrap and compact DNA into chromatin, limiting DNA accessibility to the cellular machineries which require DNA as a template. Histones thereby play a central role in transcription regulation, DNA repair, DNA replication and chromosomal stability. DNA accessibility is regulated via a complex set of post-translational modifications of histones, also called histone code, and nucleosome remodeling. In Pyrenomonas salina, this protein is Histone H4.